The sequence spans 266 residues: Transcription regulator FGM4 (266 aa).

The interval 17–36 (KTQNRLAKRKSRIHAGKQQG) is disordered. Over residues 18–31 (TQNRLAKRKSRIHA) the composition is skewed to basic residues. 2 ANK repeats span residues 183 to 212 (KPGSPLHIASAMGHLKVVKTLITYGANVNE) and 216 to 245 (AGYSPIHYATRNNHTAIVALLLEKGADWSY).

It is found in the nucleus. Transcription regulator; part of the Fg3_54/C64 gene cluster that mediates the biosynthesis of the octapeptide fusaoctaxin A, a virulence factor that is required for cell-to-cell invasiveness of plant host. Positively regulates the expression the Fg3_54/C64 gene cluster. The sequence is that of Transcription regulator FGM4 from Gibberella zeae (strain ATCC MYA-4620 / CBS 123657 / FGSC 9075 / NRRL 31084 / PH-1) (Wheat head blight fungus).